The primary structure comprises 324 residues: Lactonase drp35 (324 aa).

The Ca(2+) site is built by Glu-47, Ser-109, Gly-111, Asp-129, Thr-132, Tyr-134, Asp-137, Asn-184, Asp-235, and Ser-236. The active-site Proton donor is Asp-235.

This sequence belongs to the SMP-30/CGR1 family. Ca(2+) is required as a cofactor.

It localises to the cytoplasm. In terms of biological role, exhibits lactonase activity. Acts in cells with perturbed membrane integrity and is possibly related to the membrane homeostasis. This chain is Lactonase drp35 (drp35), found in Staphylococcus aureus (strain MRSA252).